The sequence spans 395 residues: Ketol-acid reductoisomerase, mitochondrial (395 aa).

The N-terminal 47 residues, 1-47 (MLRTQAARLICNSRVITAKRTFALATRAAAYSRPAARFVKPMITTRG), are a transit peptide targeting the mitochondrion. Residues 57 to 246 (VETVYERADW…AIGSGYVYQT (190 aa)) form the KARI N-terminal Rossmann domain. Residues 84–93 (GYGSQGYGQG), 108–113 (RKDGAS), and 146–150 (SDAAQ) contribute to the NADP(+) site. H171 is an active-site residue. The region spanning 247 to 394 (TFEREVNSDL…KEVRKLRPEN (148 aa)) is the KARI C-terminal knotted domain. Mg(2+)-binding residues include D255, E259, E291, and E295. S317 is a binding site for substrate. A Phosphoserine modification is found at S355. The segment at 363-395 (DYREKLEKELDTIRNMEIWKVGKEVRKLRPENQ) is hydrophilic.

This sequence belongs to the ketol-acid reductoisomerase family. Mg(2+) serves as cofactor.

The protein resides in the mitochondrion. It catalyses the reaction (2R)-2,3-dihydroxy-3-methylbutanoate + NADP(+) = (2S)-2-acetolactate + NADPH + H(+). It carries out the reaction (2R,3R)-2,3-dihydroxy-3-methylpentanoate + NADP(+) = (S)-2-ethyl-2-hydroxy-3-oxobutanoate + NADPH + H(+). It functions in the pathway amino-acid biosynthesis; L-isoleucine biosynthesis; L-isoleucine from 2-oxobutanoate: step 2/4. It participates in amino-acid biosynthesis; L-valine biosynthesis; L-valine from pyruvate: step 2/4. Involved in the biosynthesis of branched-chain amino acids (BCAA). Catalyzes the second common step in the parallel biosynthesis of isoleucine and valine. Converts alpha-aceto-alpha-hydroxybutyrate (AHB) to alpha,beta-dihydroxy-beta-methylvalerate (DHMV) and alpha-acetolactate (AL) to alpha,beta-dihydroxy-isovalerate (DHV) in isoleucine and valine biosynthesis, respectively. The sequence is that of Ketol-acid reductoisomerase, mitochondrial from Saccharomyces cerevisiae (strain ATCC 204508 / S288c) (Baker's yeast).